The primary structure comprises 51 residues: Large ribosomal subunit protein eL39 (51 aa).

The tract at residues 1–23 is disordered; the sequence is MPSQKSFRTKQKLAKAQKQNRPL.

Belongs to the eukaryotic ribosomal protein eL39 family. In terms of assembly, component of the large ribosomal subunit. Mature ribosomes consist of a small (40S) and a large (60S) subunit. The 40S subunit contains about 32 different proteins and 1 molecule of RNA (18S). The 60S subunit contains 45 different proteins and 3 molecules of RNA (25S, 5.8S and 5S).

The protein resides in the cytoplasm. In terms of biological role, component of the ribosome, a large ribonucleoprotein complex responsible for the synthesis of proteins in the cell. The small ribosomal subunit (SSU) binds messenger RNAs (mRNAs) and translates the encoded message by selecting cognate aminoacyl-transfer RNA (tRNA) molecules. The large subunit (LSU) contains the ribosomal catalytic site termed the peptidyl transferase center (PTC), which catalyzes the formation of peptide bonds, thereby polymerizing the amino acids delivered by tRNAs into a polypeptide chain. The nascent polypeptides leave the ribosome through a tunnel in the LSU and interact with protein factors that function in enzymatic processing, targeting, and the membrane insertion of nascent chains at the exit of the ribosomal tunnel. The polypeptide is Large ribosomal subunit protein eL39 (Candida albicans (strain SC5314 / ATCC MYA-2876) (Yeast)).